The following is a 141-amino-acid chain: Hemoglobin subunit alpha (141 aa).

The 141-residue stretch at 1 to 141 (VLSPADKTNL…VSTVLTSKYR (141 aa)) folds into the Globin domain. Ser3 carries the phosphoserine modification. Lys7 is subject to N6-succinyllysine. Thr8 is subject to Phosphothreonine. Residue Lys11 is modified to N6-succinyllysine. Lys16 carries the post-translational modification N6-acetyllysine; alternate. The residue at position 16 (Lys16) is an N6-succinyllysine; alternate. The residue at position 24 (Tyr24) is a Phosphotyrosine. The residue at position 40 (Lys40) is an N6-succinyllysine. Ser49 bears the Phosphoserine mark. An O2-binding site is contributed by His58. His87 is a heme b binding site. A Phosphoserine modification is found at Ser102. Thr108 carries the post-translational modification Phosphothreonine. At Ser124 the chain carries Phosphoserine. Thr134 and Thr137 each carry phosphothreonine. Ser138 is modified (phosphoserine).

The protein belongs to the globin family. As to quaternary structure, heterotetramer of two alpha chains and two beta chains. As to expression, red blood cells.

Its function is as follows. Involved in oxygen transport from the lung to the various peripheral tissues. This Tamias striatus (Eastern chipmunk) protein is Hemoglobin subunit alpha.